The sequence spans 103 residues: Large ribosomal subunit protein bL21 (103 aa).

Belongs to the bacterial ribosomal protein bL21 family. Part of the 50S ribosomal subunit. Contacts protein L20.

Functionally, this protein binds to 23S rRNA in the presence of protein L20. The polypeptide is Large ribosomal subunit protein bL21 (Histophilus somni (strain 129Pt) (Haemophilus somnus)).